The chain runs to 265 residues: Photosystem II 22 kDa protein, chloroplastic (265 aa).

The transit peptide at 1 to 59 (MAQTMLLTSGVTAGHFLRNKSPLAQPKVHHLFLSGNSPVALPSRRQSFVPLALFKPKTK) directs the protein to the chloroplast. Tandem repeats lie at residues 54 to 158 (FKPK…FVDD) and 159 to 264 (PPTG…DGEE). 4 helical membrane-spanning segments follow: residues 96 to 116 (VAMIGFAASLLGEALTGKGIL), 130 to 150 (AEPLLLFFILFTLLGAIGALG), 195 to 215 (LFVGRLAQLGIAFSLIGEIIT), and 229 to 249 (IPIQDIEPLVLLNVAFFFFAA).

The protein belongs to the ELIP/psbS family.

It is found in the plastid. It localises to the chloroplast thylakoid membrane. In terms of biological role, plays an important role in non-photochemical quenching (NPQ), a process maintains the balance between dissipation and utilization of light energy to minimize generation of oxidizing molecules, thereby protecting the plant against photo-oxidative damage; acts upstream of DLDG1. Is not necessary for efficient light harvesting and photosynthesis. This chain is Photosystem II 22 kDa protein, chloroplastic, found in Arabidopsis thaliana (Mouse-ear cress).